Consider the following 185-residue polypeptide: Crossover junction endodeoxyribonuclease RuvC (185 aa).

Residues Asp7, Glu68, and Asp141 contribute to the active site. Positions 7, 68, and 141 each coordinate Mg(2+).

The protein belongs to the RuvC family. In terms of assembly, homodimer which binds Holliday junction (HJ) DNA. The HJ becomes 2-fold symmetrical on binding to RuvC with unstacked arms; it has a different conformation from HJ DNA in complex with RuvA. In the full resolvosome a probable DNA-RuvA(4)-RuvB(12)-RuvC(2) complex forms which resolves the HJ. Mg(2+) serves as cofactor.

Its subcellular location is the cytoplasm. The catalysed reaction is Endonucleolytic cleavage at a junction such as a reciprocal single-stranded crossover between two homologous DNA duplexes (Holliday junction).. Its function is as follows. The RuvA-RuvB-RuvC complex processes Holliday junction (HJ) DNA during genetic recombination and DNA repair. Endonuclease that resolves HJ intermediates. Cleaves cruciform DNA by making single-stranded nicks across the HJ at symmetrical positions within the homologous arms, yielding a 5'-phosphate and a 3'-hydroxyl group; requires a central core of homology in the junction. The consensus cleavage sequence is 5'-(A/T)TT(C/G)-3'. Cleavage occurs on the 3'-side of the TT dinucleotide at the point of strand exchange. HJ branch migration catalyzed by RuvA-RuvB allows RuvC to scan DNA until it finds its consensus sequence, where it cleaves and resolves the cruciform DNA. The sequence is that of Crossover junction endodeoxyribonuclease RuvC from Mycolicibacterium smegmatis (strain ATCC 700084 / mc(2)155) (Mycobacterium smegmatis).